The primary structure comprises 153 residues: SsrA-binding protein (153 aa).

Belongs to the SmpB family.

Its subcellular location is the cytoplasm. Functionally, required for rescue of stalled ribosomes mediated by trans-translation. Binds to transfer-messenger RNA (tmRNA), required for stable association of tmRNA with ribosomes. tmRNA and SmpB together mimic tRNA shape, replacing the anticodon stem-loop with SmpB. tmRNA is encoded by the ssrA gene; the 2 termini fold to resemble tRNA(Ala) and it encodes a 'tag peptide', a short internal open reading frame. During trans-translation Ala-aminoacylated tmRNA acts like a tRNA, entering the A-site of stalled ribosomes, displacing the stalled mRNA. The ribosome then switches to translate the ORF on the tmRNA; the nascent peptide is terminated with the 'tag peptide' encoded by the tmRNA and targeted for degradation. The ribosome is freed to recommence translation, which seems to be the essential function of trans-translation. The chain is SsrA-binding protein from Cytophaga hutchinsonii (strain ATCC 33406 / DSM 1761 / CIP 103989 / NBRC 15051 / NCIMB 9469 / D465).